The primary structure comprises 190 residues: Small ribosomal subunit protein uS5 (190 aa).

One can recognise an S5 DRBM domain in the interval 22-85; sequence FVDKLVHINR…ESAKRNLTRV (64 aa).

The protein belongs to the universal ribosomal protein uS5 family. As to quaternary structure, part of the 30S ribosomal subunit. Contacts proteins S4 and S8.

With S4 and S12 plays an important role in translational accuracy. Functionally, located at the back of the 30S subunit body where it stabilizes the conformation of the head with respect to the body. This Rhodopseudomonas palustris (strain BisA53) protein is Small ribosomal subunit protein uS5.